The sequence spans 246 residues: Adenosylcobinamide-GDP ribazoletransferase (246 aa).

A run of 6 helical transmembrane segments spans residues 34-54 (IVTF…VALL), 59-79 (CGVP…TGGF), 113-133 (GGLA…ELLL), 138-158 (PIAA…LLMY), 171-191 (LFIG…GVAL), and 194-214 (VLLG…IWGL).

It belongs to the CobS family. Mg(2+) serves as cofactor.

The protein resides in the cell inner membrane. The catalysed reaction is alpha-ribazole + adenosylcob(III)inamide-GDP = adenosylcob(III)alamin + GMP + H(+). It catalyses the reaction alpha-ribazole 5'-phosphate + adenosylcob(III)inamide-GDP = adenosylcob(III)alamin 5'-phosphate + GMP + H(+). It participates in cofactor biosynthesis; adenosylcobalamin biosynthesis; adenosylcobalamin from cob(II)yrinate a,c-diamide: step 7/7. Joins adenosylcobinamide-GDP and alpha-ribazole to generate adenosylcobalamin (Ado-cobalamin). Also synthesizes adenosylcobalamin 5'-phosphate from adenosylcobinamide-GDP and alpha-ribazole 5'-phosphate. This Klebsiella pneumoniae (strain 342) protein is Adenosylcobinamide-GDP ribazoletransferase.